The sequence spans 612 residues: Dihydroxy-acid dehydratase (612 aa).

Asp81 is a Mg(2+) binding site. Cys122 is a [2Fe-2S] cluster binding site. Residues Asp123 and Lys124 each coordinate Mg(2+). Lys124 is modified (N6-carboxylysine). Cys193 lines the [2Fe-2S] cluster pocket. Glu489 provides a ligand contact to Mg(2+). The active-site Proton acceptor is Ser515.

It belongs to the IlvD/Edd family. In terms of assembly, homodimer. [2Fe-2S] cluster is required as a cofactor. Mg(2+) serves as cofactor.

It catalyses the reaction (2R)-2,3-dihydroxy-3-methylbutanoate = 3-methyl-2-oxobutanoate + H2O. The enzyme catalyses (2R,3R)-2,3-dihydroxy-3-methylpentanoate = (S)-3-methyl-2-oxopentanoate + H2O. The protein operates within amino-acid biosynthesis; L-isoleucine biosynthesis; L-isoleucine from 2-oxobutanoate: step 3/4. It functions in the pathway amino-acid biosynthesis; L-valine biosynthesis; L-valine from pyruvate: step 3/4. Functions in the biosynthesis of branched-chain amino acids. Catalyzes the dehydration of (2R,3R)-2,3-dihydroxy-3-methylpentanoate (2,3-dihydroxy-3-methylvalerate) into 2-oxo-3-methylpentanoate (2-oxo-3-methylvalerate) and of (2R)-2,3-dihydroxy-3-methylbutanoate (2,3-dihydroxyisovalerate) into 2-oxo-3-methylbutanoate (2-oxoisovalerate), the penultimate precursor to L-isoleucine and L-valine, respectively. This chain is Dihydroxy-acid dehydratase, found in Pseudomonas paraeruginosa (strain DSM 24068 / PA7) (Pseudomonas aeruginosa (strain PA7)).